A 213-amino-acid chain; its full sequence is MGITMDEEVIFETPRELISIKRIKDIPRSKDTHVFAACITSDGYPLIGARRTSFAFQAILSQQNSDSIFRVSTKLLRFMYYNELREIFRRLRKGSINNIDPHFEELILLGGKLDKKESIKDCLRRELKEESDERITVKEFGNVILKLTTRDKLFNKVYISYCMACFINQSLEDLSHTSIYNVEIRKIKSLNDCINDDKYEYLSYIYNMLVNSK.

The N(7)-methyl-GTP site is built by E16 and R50. The Nudix hydrolase domain maps to 30–209 (KDTHVFAACI…EYLSYIYNML (180 aa)). Positions 111 to 132 (GKLDKKESIKDCLRRELKEESD) match the Nudix box motif. Positions 117, 126, 130, 151, and 183 each coordinate Mg(2+). E126 (nucleophile) is an active-site residue. D151 contributes to the N(7)-methyl-GTP binding site.

It belongs to the Nudix hydrolase family. The cofactor is Mg(2+). Mn(2+) serves as cofactor.

The catalysed reaction is a 5'-end (N(7)-methyl 5'-triphosphoguanosine)-guanosine in mRNA + H2O = a 5'-end phospho-guanosine in mRNA + N(7)-methyl-GDP + 2 H(+). In terms of biological role, decapping enzyme that remove the protective 5'-cap from both host and viral mRNAs to commit transcripts for decay by the cellular exonuclease XRN1. Accelerates viral and cellular mRNA turnover to eliminate competing host mRNAs and allow stage-specific synthesis of viral proteins. Acceleration of the turnover of cellular transcripts may even promote the shutoff of host protein synthesis. The protein is mRNA-decapping protein OPG121 (OPG121) of Homo sapiens (Human).